We begin with the raw amino-acid sequence, 151 residues long: Small ribosomal subunit protein uS15z (151 aa).

This sequence belongs to the universal ribosomal protein uS15 family.

The chain is Small ribosomal subunit protein uS15z (RPS13A) from Arabidopsis thaliana (Mouse-ear cress).